A 135-amino-acid chain; its full sequence is Ribosome-binding factor A (135 aa).

It belongs to the RbfA family. In terms of assembly, monomer. Binds 30S ribosomal subunits, but not 50S ribosomal subunits or 70S ribosomes.

It is found in the cytoplasm. Its function is as follows. One of several proteins that assist in the late maturation steps of the functional core of the 30S ribosomal subunit. Associates with free 30S ribosomal subunits (but not with 30S subunits that are part of 70S ribosomes or polysomes). Required for efficient processing of 16S rRNA. May interact with the 5'-terminal helix region of 16S rRNA. The sequence is that of Ribosome-binding factor A from Hyphomonas neptunium (strain ATCC 15444).